Consider the following 252-residue polypeptide: tRNA-cytidine(32) 2-sulfurtransferase (252 aa).

Residues 37–42 (SGGKDS) carry the PP-loop motif motif. Residues Cys-112, Cys-115, and Cys-202 each contribute to the [4Fe-4S] cluster site.

The protein belongs to the TtcA family. As to quaternary structure, homodimer. Mg(2+) is required as a cofactor. It depends on [4Fe-4S] cluster as a cofactor.

It localises to the cytoplasm. The enzyme catalyses cytidine(32) in tRNA + S-sulfanyl-L-cysteinyl-[cysteine desulfurase] + AH2 + ATP = 2-thiocytidine(32) in tRNA + L-cysteinyl-[cysteine desulfurase] + A + AMP + diphosphate + H(+). The protein operates within tRNA modification. In terms of biological role, catalyzes the ATP-dependent 2-thiolation of cytidine in position 32 of tRNA, to form 2-thiocytidine (s(2)C32). The sulfur atoms are provided by the cysteine/cysteine desulfurase (IscS) system. This Geotalea daltonii (strain DSM 22248 / JCM 15807 / FRC-32) (Geobacter daltonii) protein is tRNA-cytidine(32) 2-sulfurtransferase.